Consider the following 359-residue polypeptide: Putative X-Core fused protein (359 aa).

Disordered regions lie at residues 25–48 (SRGRPVSRPFGPHPSPSSSAVPAD) and 312–359 (NAPI…ESQC). The segment covering 325–352 (VRRRGRSPRRRTPSPRRRRSESPRRRRS) has biased composition (basic residues).

The chain is Putative X-Core fused protein from Homo sapiens (Human).